Consider the following 138-residue polypeptide: Nucleoside diphosphate kinase (138 aa).

ATP contacts are provided by Lys10, Phe58, Arg86, Thr92, Arg103, and Asn113. His116 acts as the Pros-phosphohistidine intermediate in catalysis.

This sequence belongs to the NDK family. As to quaternary structure, homotetramer. Mg(2+) is required as a cofactor.

Its subcellular location is the cytoplasm. It carries out the reaction a 2'-deoxyribonucleoside 5'-diphosphate + ATP = a 2'-deoxyribonucleoside 5'-triphosphate + ADP. It catalyses the reaction a ribonucleoside 5'-diphosphate + ATP = a ribonucleoside 5'-triphosphate + ADP. In terms of biological role, major role in the synthesis of nucleoside triphosphates other than ATP. The ATP gamma phosphate is transferred to the NDP beta phosphate via a ping-pong mechanism, using a phosphorylated active-site intermediate. This chain is Nucleoside diphosphate kinase, found in Haemophilus ducreyi (strain 35000HP / ATCC 700724).